The primary structure comprises 349 residues: Phenylalanine--tRNA ligase alpha subunit (349 aa).

Residue glutamate 259 participates in Mg(2+) binding.

This sequence belongs to the class-II aminoacyl-tRNA synthetase family. Phe-tRNA synthetase alpha subunit type 1 subfamily. As to quaternary structure, tetramer of two alpha and two beta subunits. Requires Mg(2+) as cofactor.

It localises to the cytoplasm. It catalyses the reaction tRNA(Phe) + L-phenylalanine + ATP = L-phenylalanyl-tRNA(Phe) + AMP + diphosphate + H(+). The protein is Phenylalanine--tRNA ligase alpha subunit of Lactobacillus acidophilus (strain ATCC 700396 / NCK56 / N2 / NCFM).